Here is a 180-residue protein sequence, read N- to C-terminus: ATP-dependent protease subunit HslV (180 aa).

Residue Thr-7 is part of the active site. Positions 165, 168, and 171 each coordinate Na(+).

This sequence belongs to the peptidase T1B family. HslV subfamily. As to quaternary structure, a double ring-shaped homohexamer of HslV is capped on each side by a ring-shaped HslU homohexamer. The assembly of the HslU/HslV complex is dependent on binding of ATP.

The protein resides in the cytoplasm. It carries out the reaction ATP-dependent cleavage of peptide bonds with broad specificity.. Its activity is regulated as follows. Allosterically activated by HslU binding. Its function is as follows. Protease subunit of a proteasome-like degradation complex believed to be a general protein degrading machinery. The chain is ATP-dependent protease subunit HslV from Bacillus cereus (strain ATCC 10987 / NRS 248).